The chain runs to 275 residues: Elongation factor Ts (275 aa).

An involved in Mg(2+) ion dislocation from EF-Tu region spans residues 76-79; the sequence is TDFV.

The protein belongs to the EF-Ts family.

It is found in the cytoplasm. Its function is as follows. Associates with the EF-Tu.GDP complex and induces the exchange of GDP to GTP. It remains bound to the aminoacyl-tRNA.EF-Tu.GTP complex up to the GTP hydrolysis stage on the ribosome. This Corynebacterium diphtheriae (strain ATCC 700971 / NCTC 13129 / Biotype gravis) protein is Elongation factor Ts.